The sequence spans 317 residues: MPVQGSQRRLLGSLNSTPTATPHLGLAANQTGARCLEVSVPDGLFLSLGLVSLVENVLVVTAIAKNRNLHSPMYCFICCLALSDLLVSGSNMLETAVTLLLEAGVLAARAAVVQQLDNVIDVITCSSMLSSLCFLGAIAVDRYISIFYALRYHSIVTLPRARRAVAAIWVASVLFSTLFIAYYDHAAVLLCLVIFFLAMLVLMAVLYVHMLARACQHAQGIARLHKRQRLAHQGFGLKGAATLTILLGIFFLCWGPFFLHLTLIVLCPQHPTCSCIFKNFNLFLALIICNAIIDPLIYAFRSQELRRTLKEVLLCSW.

Residues 1 to 37 (MPVQGSQRRLLGSLNSTPTATPHLGLAANQTGARCLE) are Extracellular-facing. N29 is a glycosylation site (N-linked (GlcNAc...) asparagine). The chain crosses the membrane as a helical span at residues 38–63 (VSVPDGLFLSLGLVSLVENVLVVTAI). Residues 64 to 72 (AKNRNLHSP) lie on the Cytoplasmic side of the membrane. A helical transmembrane segment spans residues 73–93 (MYCFICCLALSDLLVSGSNML). Over 94–118 (ETAVTLLLEAGVLAARAAVVQQLDN) the chain is Extracellular. A helical transmembrane segment spans residues 119 to 140 (VIDVITCSSMLSSLCFLGAIAV). Topologically, residues 141 to 163 (DRYISIFYALRYHSIVTLPRARR) are cytoplasmic. The helical transmembrane segment at 164-183 (AVAAIWVASVLFSTLFIAYY) threads the bilayer. At 184-191 (DHAAVLLC) the chain is on the extracellular side. The helical transmembrane segment at 192 to 211 (LVIFFLAMLVLMAVLYVHML) threads the bilayer. The Cytoplasmic segment spans residues 212–240 (ARACQHAQGIARLHKRQRLAHQGFGLKGA). The helical transmembrane segment at 241-266 (ATLTILLGIFFLCWGPFFLHLTLIVL) threads the bilayer. The Extracellular portion of the chain corresponds to 267–279 (CPQHPTCSCIFKN). A helical membrane pass occupies residues 280-300 (FNLFLALIICNAIIDPLIYAF). Topologically, residues 301 to 317 (RSQELRRTLKEVLLCSW) are cytoplasmic. C315 carries the S-palmitoyl cysteine lipid modification.

Belongs to the G-protein coupled receptor 1 family. In terms of assembly, interacts with MGRN1, but does not undergo MGRN1-mediated ubiquitination; this interaction competes with GNAS-binding and thus inhibits agonist-induced cAMP production. Interacts with OPN3; the interaction results in a decrease in MC1R-mediated cAMP signaling and ultimately a decrease in melanin production in melanocytes.

The protein resides in the cell membrane. Its function is as follows. Receptor for MSH (alpha, beta and gamma) and ACTH. The activity of this receptor is mediated by G proteins which activate adenylate cyclase. Mediates melanogenesis, the production of eumelanin (black/brown) and phaeomelanin (red/yellow), via regulation of cAMP signaling in melanocytes. The sequence is that of Melanocyte-stimulating hormone receptor (MC1R) from Papio anubis (Olive baboon).